The sequence spans 189 residues: Crossover junction endodeoxyribonuclease RuvC (189 aa).

Active-site residues include aspartate 7, glutamate 68, and aspartate 141. Residues aspartate 7, glutamate 68, and aspartate 141 each contribute to the Mg(2+) site.

The protein belongs to the RuvC family. In terms of assembly, homodimer which binds Holliday junction (HJ) DNA. The HJ becomes 2-fold symmetrical on binding to RuvC with unstacked arms; it has a different conformation from HJ DNA in complex with RuvA. In the full resolvosome a probable DNA-RuvA(4)-RuvB(12)-RuvC(2) complex forms which resolves the HJ. It depends on Mg(2+) as a cofactor.

The protein localises to the cytoplasm. It carries out the reaction Endonucleolytic cleavage at a junction such as a reciprocal single-stranded crossover between two homologous DNA duplexes (Holliday junction).. Functionally, the RuvA-RuvB-RuvC complex processes Holliday junction (HJ) DNA during genetic recombination and DNA repair. Endonuclease that resolves HJ intermediates. Cleaves cruciform DNA by making single-stranded nicks across the HJ at symmetrical positions within the homologous arms, yielding a 5'-phosphate and a 3'-hydroxyl group; requires a central core of homology in the junction. The consensus cleavage sequence is 5'-(A/T)TT(C/G)-3'. Cleavage occurs on the 3'-side of the TT dinucleotide at the point of strand exchange. HJ branch migration catalyzed by RuvA-RuvB allows RuvC to scan DNA until it finds its consensus sequence, where it cleaves and resolves the cruciform DNA. This Nocardia farcinica (strain IFM 10152) protein is Crossover junction endodeoxyribonuclease RuvC.